The chain runs to 482 residues: Glutamyl-tRNA(Gln) amidotransferase subunit A (482 aa).

Active-site charge relay system residues include K81 and S156. S180 functions as the Acyl-ester intermediate in the catalytic mechanism.

Belongs to the amidase family. GatA subfamily. In terms of assembly, heterotrimer of A, B and C subunits.

It carries out the reaction L-glutamyl-tRNA(Gln) + L-glutamine + ATP + H2O = L-glutaminyl-tRNA(Gln) + L-glutamate + ADP + phosphate + H(+). In terms of biological role, allows the formation of correctly charged Gln-tRNA(Gln) through the transamidation of misacylated Glu-tRNA(Gln) in organisms which lack glutaminyl-tRNA synthetase. The reaction takes place in the presence of glutamine and ATP through an activated gamma-phospho-Glu-tRNA(Gln). The sequence is that of Glutamyl-tRNA(Gln) amidotransferase subunit A from Brachyspira hyodysenteriae (strain ATCC 49526 / WA1).